A 274-amino-acid polypeptide reads, in one-letter code: Rhamnulose-1-phosphate aldolase (274 aa).

E117 is an active-site residue. Residues H141, H143, and H212 each contribute to the Zn(2+) site.

This sequence belongs to the aldolase class II family. RhaD subfamily. As to quaternary structure, homotetramer. Zn(2+) serves as cofactor.

It localises to the cytoplasm. The catalysed reaction is L-rhamnulose 1-phosphate = (S)-lactaldehyde + dihydroxyacetone phosphate. It functions in the pathway carbohydrate degradation; L-rhamnose degradation; glycerone phosphate from L-rhamnose: step 3/3. Functionally, catalyzes the reversible cleavage of L-rhamnulose-1-phosphate to dihydroxyacetone phosphate (DHAP) and L-lactaldehyde. This Escherichia coli O17:K52:H18 (strain UMN026 / ExPEC) protein is Rhamnulose-1-phosphate aldolase.